We begin with the raw amino-acid sequence, 160 residues long: Probable transcriptional regulator YgiV (160 aa).

In terms of biological role, represses expression of mcbR. This Escherichia coli O157:H7 protein is Probable transcriptional regulator YgiV (ygiV).